The chain runs to 290 residues: Zinc finger matrin-type protein 3 (290 aa).

Matrin-type zinc fingers lie at residues 70-100 and 148-178; these read LFCKLCNVTLNSAQQAQAHYQGKNHGKKLRN and DYCKLCDASFSSPAVAQAHYQGKNHAKRLRL. Disordered stretches follow at residues 182–203 and 266–290; these read QSHSFSDSAEAGQRRTRKEGSE and ESKQHKSKVSEQRYRSEMENLGYVQ. The segment at 246-276 adopts a Matrin-type 3 zinc-finger fold; sequence FYCSMCNVGAGEEVEFRQHLESKQHKSKVSE. Residues 266–283 are compositionally biased toward basic and acidic residues; it reads ESKQHKSKVSEQRYRSEM.

In terms of assembly, interacts with dsRNA. In terms of tissue distribution, constitutively expressed in brain and testis. Also expressed in lung, kidney and spleen after whole body gamma irradiation.

It localises to the nucleus. It is found in the nucleolus. Functionally, acts as a bona fide target gene of p53/TP53. May play a role in the TP53-dependent growth regulatory pathway. May contribute to TP53-mediated apoptosis by regulation of TP53 expression and translocation to the nucleus and nucleolus. The chain is Zinc finger matrin-type protein 3 from Mus musculus (Mouse).